Reading from the N-terminus, the 47-residue chain is Photosystem II reaction center protein K (47 aa).

Residues 1-10 constitute a propeptide that is removed on maturation; that stretch reads MAAFSLDLLA. Residues 19-39 traverse the membrane as a helical segment; the sequence is FGPLIDILPIIPVFFLLLAFV.

Belongs to the PsbK family. PSII is composed of 1 copy each of membrane proteins PsbA, PsbB, PsbC, PsbD, PsbE, PsbF, PsbH, PsbI, PsbJ, PsbK, PsbL, PsbM, PsbT, PsbX, PsbY, PsbZ, Psb30/Ycf12, peripheral proteins PsbO, CyanoQ (PsbQ), PsbU, PsbV and a large number of cofactors. It forms dimeric complexes.

The protein localises to the cellular thylakoid membrane. One of the components of the core complex of photosystem II (PSII). PSII is a light-driven water:plastoquinone oxidoreductase that uses light energy to abstract electrons from H(2)O, generating O(2) and a proton gradient subsequently used for ATP formation. It consists of a core antenna complex that captures photons, and an electron transfer chain that converts photonic excitation into a charge separation. This is Photosystem II reaction center protein K from Synechococcus sp. (strain WH7803).